A 300-amino-acid polypeptide reads, in one-letter code: Cation-efflux pump FieF (300 aa).

4 consecutive transmembrane segments (helical) span residues 12–32, 39–59, 82–102, and 114–134; these read AAIA…FAWW, ILAA…NLLV, AALA…LTGI, and PGVG…LVSF. Zn(2+)-binding residues include aspartate 45 and aspartate 49. Zn(2+) is bound by residues histidine 153 and aspartate 157. Helical transmembrane passes span 156–176 and 178–198; these read SDVM…YGWH and ADAL…LRMG.

The protein belongs to the cation diffusion facilitator (CDF) transporter (TC 2.A.4) family. FieF subfamily. As to quaternary structure, homodimer.

The protein localises to the cell inner membrane. The catalysed reaction is Zn(2+)(in) + H(+)(out) = Zn(2+)(out) + H(+)(in). It catalyses the reaction Cd(2+)(in) + H(+)(out) = Cd(2+)(out) + H(+)(in). It carries out the reaction Fe(2+)(in) + H(+)(out) = Fe(2+)(out) + H(+)(in). In terms of biological role, divalent metal cation transporter which exports Zn(2+), Cd(2+) and possibly Fe(2+). May be involved in zinc and iron detoxification by efflux. The polypeptide is Cation-efflux pump FieF (Escherichia coli O127:H6 (strain E2348/69 / EPEC)).